The sequence spans 449 residues: Allantoinase (449 aa).

Zn(2+) is bound by residues His59, His61, Lys146, His182, His238, and Asp311. The residue at position 146 (Lys146) is an N6-carboxylysine.

Belongs to the metallo-dependent hydrolases superfamily. Allantoinase family. In terms of assembly, homotetramer. Zn(2+) is required as a cofactor. Post-translationally, carboxylation allows a single lysine to coordinate two zinc ions.

It catalyses the reaction (S)-allantoin + H2O = allantoate + H(+). Its pathway is nitrogen metabolism; (S)-allantoin degradation; allantoate from (S)-allantoin: step 1/1. Catalyzes the conversion of allantoin (5-ureidohydantoin) to allantoic acid by hydrolytic cleavage of the five-member hydantoin ring. The protein is Allantoinase of Deinococcus geothermalis (strain DSM 11300 / CIP 105573 / AG-3a).